Here is a 214-residue protein sequence, read N- to C-terminus: Putative ankyrin repeat protein RF_1081 (214 aa).

The segment covering 1-14 has biased composition (polar residues); that stretch reads MRKQQIPTLSTSAL. Residues 1 to 32 form a disordered region; it reads MRKQQIPTLSTSALDKSPGPGSPDSDIEMKST. Residues 67 to 135 form an ANK repeat; sequence NPNALLHEAA…EEPILVTKKD (69 aa).

This Rickettsia felis (strain ATCC VR-1525 / URRWXCal2) (Rickettsia azadi) protein is Putative ankyrin repeat protein RF_1081.